The primary structure comprises 372 residues: High-affinity lysophosphatidic acid receptor (372 aa).

Residues 1 to 38 (MGCNNTALDNCMLPNLSIATAPLDLRFAFSTPLRMLLA) lie on the Extracellular side of the membrane. N4 and N15 each carry an N-linked (GlcNAc...) asparagine glycan. Residues 39–59 (IIMILMIAIAFLGNAIVCLIV) traverse the membrane as a helical segment. Over 60–80 (YQKPAMRSAINLLLATLAFSD) the chain is Cytoplasmic. The chain crosses the membrane as a helical span at residues 81–101 (IMLSLFCMPFTAVTIITGSWL). Residues 102-108 (FGTQFCQ) lie on the Extracellular side of the membrane. The chain crosses the membrane as a helical span at residues 109–129 (ISAMLYWFFVLEGVAILLIIS). Over 130 to 149 (VDRFLIIVQRQDKLNPHRAK) the chain is Cytoplasmic. Residues 150–170 (IMIAASWVLSFCISLPSVVGW) traverse the membrane as a helical segment. Residues 171 to 198 (TLVEVPTRAPQCVLGYTEFSADRVYAVM) are Extracellular-facing. Residues 199-219 (LIVAVFFIPFSVMLYSYLCIL) traverse the membrane as a helical segment. Residues 220–268 (NTVRRNAVRIHTHADSLCLSQVSKLGLMGLQRPHQMNVDMSFKTRAFTT) are Cytoplasmic-facing. The chain crosses the membrane as a helical span at residues 269–289 (ILILFIGFSLCWLPHSVFSLL). The Extracellular portion of the chain corresponds to 290-301 (SVFSRTFYYSSS). The helical transmembrane segment at 302–324 (FYSISTCTLWLTYLKSVFNPVIY) threads the bilayer. Residues 325-372 (CWRIKKFREACLEFMPKTFKILPNVRGRTRRRIRPSTIYVCGEHQSAV) lie on the Cytoplasmic side of the membrane.

Belongs to the G-protein coupled receptor 1 family. Ubiquitously expressed.

It is found in the cell membrane. Its function is as follows. Highly selective receptor for lysophosphatidic acid (LPA), a mediator of diverse cellular activities. This Xenopus laevis (African clawed frog) protein is High-affinity lysophosphatidic acid receptor.